The following is a 244-amino-acid chain: Multiple organellar RNA editing factor 3, mitochondrial (244 aa).

The transit peptide at 1–62 (MALISTRRTL…GPCYISTRPK (62 aa)) directs the protein to the mitochondrion. Disordered stretches follow at residues 59 to 82 (TRPK…SNRP) and 196 to 244 (YRFT…KPSA). Residues 60 to 80 (RPKTSGSGYSPLNDPSPNWSN) show a composition bias toward polar residues. A compositionally biased stretch (basic and acidic residues) spans 210–226 (PRYDRRRETMQVERREP).

It belongs to the MORF family. In terms of assembly, heterodimer with MORF1. Homodimer and heterodimers with MORF8/RIP1, MORF4/RIP4 and MORF5/RIP5.

The protein localises to the mitochondrion. Its function is as follows. Involved in organellar RNA editing. Required for the processing of RNA editing sites in mitochondria. This chain is Multiple organellar RNA editing factor 3, mitochondrial, found in Arabidopsis thaliana (Mouse-ear cress).